A 326-amino-acid polypeptide reads, in one-letter code: MVTINNARKILQRVDTLPLYLHAYAFHLNMRLERVLPADLLDIASENNLRGVKIHVLDGERFSLGNMDDKELSAFGDKARRLNLDIHIETSASDKASIDEAVAIALKTGASSVRFYPRYEGNLRDVLSIIANDIAYVRETYQDSGLTFTIEQHEDLKSHELVSLVKESEMESLSLLFDFANMINANEHPIDALKTMAPHITQVHIKDALIVKEPGGLGHKACISGQGDMPFKALLTHLICLGDDEPQVTAYGLEEEVDYYAPAFRFEDEDDNPWIPYRQMSETPLPENHLLDARLRKEKEDAINQINHVRNVLQQIKQEANHLLNH.

This is an uncharacterized protein from Escherichia coli (strain K12).